The chain runs to 522 residues: Sorting nexin-1 (522 aa).

The interval methionine 1–glutamine 142 is disordered. Phosphoserine occurs at positions 32 and 39. Positions glutamate 35–aspartate 45 are enriched in acidic residues. 2 positions are modified to phosphothreonine: threonine 41 and threonine 48. A compositionally biased stretch (polar residues) spans lysine 55–leucine 65. Phosphoserine is present on residues serine 58 and serine 72. Over residues glycine 71–glutamate 80 the composition is skewed to basic and acidic residues. Polar residues predominate over residues leucine 98 to threonine 107. Over residues glutamate 132–glutamine 142 the composition is skewed to acidic residues. In terms of domain architecture, PX spans phenylalanine 143–arginine 272. 3 residues coordinate a 1,2-diacyl-sn-glycero-3-phospho-(1D-myo-inositol-3-phosphate): arginine 186, serine 188, and lysine 214. Phosphoserine is present on serine 188. Position 237 is an N6-acetyllysine (lysine 237). An a 1,2-diacyl-sn-glycero-3-phospho-(1D-myo-inositol-3-phosphate)-binding site is contributed by arginine 238. Phosphoserine is present on serine 280. The segment at glycine 281–methionine 298 is membrane-binding amphipathic helix. Residues methionine 302–serine 522 enclose the BAR domain.

This sequence belongs to the sorting nexin family. As to quaternary structure, predominantly forms heterodimers with BAR domain-containing sorting nexins SNX5, SNX6 and SNX32; can self-associate to form homodimers. The heterodimers are proposed to self-assemble into helical arrays on the membrane to stabilize and expand local membrane curvature underlying endosomal tubule formation. Thought to be a component of the originally described retromer complex (also called SNX-BAR retromer) which is a pentamer containing the heterotrimeric retromer cargo-selective complex (CSC), also described as vacuolar protein sorting subcomplex (VPS) and a heterodimeric membrane-deforming subcomplex formed between SNX1 or SNX2 and SNX5 or SNX6 (also called SNX-BAR subcomplex); the respective CSC and SNX-BAR subcomplexes associate with low affinity. Interacts with SNX5, SNX6, SNX32, VPS26A, VPS29, VPS35, DRD5, DENND5A, KALRN, RHOG (GDP-bound form). The interaction with SNX2 is reported controversially. Interacts with DNAJC13; prevented by presence of HGS. Interacts with HGS.

Its subcellular location is the endosome membrane. It is found in the golgi apparatus. It localises to the trans-Golgi network membrane. The protein localises to the early endosome membrane. The protein resides in the cell projection. Its subcellular location is the lamellipodium. In terms of biological role, involved in several stages of intracellular trafficking. Interacts with membranes containing phosphatidylinositol 3-phosphate (PtdIns(3P)) or phosphatidylinositol 3,5-bisphosphate (PtdIns(3,5)P2). Acts in part as component of the retromer membrane-deforming SNX-BAR subcomplex. The SNX-BAR retromer mediates retrograde transport of cargo proteins from endosomes to the trans-Golgi network (TGN) and is involved in endosome-to-plasma membrane transport for cargo protein recycling. The SNX-BAR subcomplex functions to deform the donor membrane into a tubular profile called endosome-to-TGN transport carrier (ETC). Can sense membrane curvature and has in vitro vesicle-to-membrane remodeling activity. Involved in retrograde endosome-to-TGN transport of lysosomal enzyme receptors (IGF2R, M6PR and SORT1). Plays a role in targeting ligand-activated EGFR to the lysosomes for degradation after endocytosis from the cell surface and release from the Golgi. Involvement in retromer-independent endocytic trafficking of P2RY1 and lysosomal degradation of protease-activated receptor-1/F2R. Promotes KALRN- and RHOG-dependent but retromer-independent membrane remodeling such as lamellipodium formation; the function is dependent on GEF activity of KALRN. Required for endocytosis of DRD5 upon agonist stimulation but not for basal receptor trafficking. The protein is Sorting nexin-1 (Snx1) of Rattus norvegicus (Rat).